The following is a 252-amino-acid chain: MAVGKNKRLSKGKKGIKKRVVDPFSRKDWYDIKAPAFFEVKNVGKTLVNRTAGLKNANDSLKGRILEVSLADLQKDEEHSFRKVKLRVEDIQGKSCLTSFNGFDMTSDKLRSLVRKWQSTIEANQTIKTTDGYLCRIFVIGFTSRRVNQVKKTTYAQSSQIRAIHQKMFQVIQNQANGCSMKELVQKLIPEVIGRAIEKATNNIYPLQNVFVRKVKILKAPKHDAQKLLELHGESQDVGSKVISDVAPLESV.

The residue at position 2 (Ala-2) is an N-acetylalanine; partial.

This sequence belongs to the eukaryotic ribosomal protein eS1 family. In terms of assembly, component of the small ribosomal subunit (SSU). Mature yeast ribosomes consist of a small (40S) and a large (60S) subunit. The 40S small subunit contains 1 molecule of ribosomal RNA (18S rRNA) and at least 33 different proteins. The large 60S subunit contains 3 rRNA molecules (25S, 5.8S and 5S rRNA) and at least 46 different proteins. eS1 interacts directly with uS11 and eS26, which form part of the mRNA exit tunnel.

The protein resides in the cytoplasm. Functionally, component of the ribosome, a large ribonucleoprotein complex responsible for the synthesis of proteins in the cell. The small ribosomal subunit (SSU) binds messenger RNAs (mRNAs) and translates the encoded message by selecting cognate aminoacyl-transfer RNA (tRNA) molecules. The large subunit (LSU) contains the ribosomal catalytic site termed the peptidyl transferase center (PTC), which catalyzes the formation of peptide bonds, thereby polymerizing the amino acids delivered by tRNAs into a polypeptide chain. The nascent polypeptides leave the ribosome through a tunnel in the LSU and interact with protein factors that function in enzymatic processing, targeting, and the membrane insertion of nascent chains at the exit of the ribosomal tunnel. This Schizosaccharomyces pombe (strain 972 / ATCC 24843) (Fission yeast) protein is Small ribosomal subunit protein eS1A (rps101).